We begin with the raw amino-acid sequence, 363 residues long: uncharacterized protein (363 aa).

Residues Q198, Y225, E246, and D291 each coordinate S-adenosyl-L-methionine. The active-site Nucleophile is the C318.

Belongs to the class I-like SAM-binding methyltransferase superfamily. RNA M5U methyltransferase family.

This is an uncharacterized protein from Mycoplasma mobile (strain ATCC 43663 / 163K / NCTC 11711) (Mesomycoplasma mobile).